The sequence spans 420 residues: Light-independent protochlorophyllide reductase subunit N (420 aa).

[4Fe-4S] cluster-binding residues include C21, C46, and C103.

Belongs to the BchN/ChlN family. Protochlorophyllide reductase is composed of three subunits; BchL, BchN and BchB. Forms a heterotetramer of two BchB and two BchN subunits. [4Fe-4S] cluster serves as cofactor.

The enzyme catalyses chlorophyllide a + oxidized 2[4Fe-4S]-[ferredoxin] + 2 ADP + 2 phosphate = protochlorophyllide a + reduced 2[4Fe-4S]-[ferredoxin] + 2 ATP + 2 H2O. Its pathway is porphyrin-containing compound metabolism; bacteriochlorophyll biosynthesis (light-independent). Its function is as follows. Component of the dark-operative protochlorophyllide reductase (DPOR) that uses Mg-ATP and reduced ferredoxin to reduce ring D of protochlorophyllide (Pchlide) to form chlorophyllide a (Chlide). This reaction is light-independent. The NB-protein (BchN-BchB) is the catalytic component of the complex. This Chlorobium phaeobacteroides (strain DSM 266 / SMG 266 / 2430) protein is Light-independent protochlorophyllide reductase subunit N.